The chain runs to 57 residues: UPF0391 membrane protein RPB_2024 (57 aa).

Helical transmembrane passes span 4–24 and 30–50; these read WVVTFLVVALIAGLLGFGGIA and IAKVIFFIAIVLFLVSAVVGL.

It belongs to the UPF0391 family.

It localises to the cell membrane. The protein is UPF0391 membrane protein RPB_2024 of Rhodopseudomonas palustris (strain HaA2).